Here is a 267-residue protein sequence, read N- to C-terminus: L-aspartate dehydrogenase (267 aa).

Residues A124 and N190 each contribute to the NAD(+) site. H220 is a catalytic residue.

It belongs to the L-aspartate dehydrogenase family.

The catalysed reaction is L-aspartate + NADP(+) + H2O = oxaloacetate + NH4(+) + NADPH + H(+). The enzyme catalyses L-aspartate + NAD(+) + H2O = oxaloacetate + NH4(+) + NADH + H(+). It participates in cofactor biosynthesis; NAD(+) biosynthesis; iminoaspartate from L-aspartate (dehydrogenase route): step 1/1. In terms of biological role, specifically catalyzes the NAD or NADP-dependent dehydrogenation of L-aspartate to iminoaspartate. The chain is L-aspartate dehydrogenase from Polaromonas sp. (strain JS666 / ATCC BAA-500).